Reading from the N-terminus, the 63-residue chain is Conotoxin p5a (63 aa).

The first 19 residues, 1-19, serve as a signal peptide directing secretion; sequence MRCLPVFVILLLLIPSAPC. The propeptide occupies 20–50; it reads VDAHPKTKDDMPLASFHDNAKGTLQRFWKKR. 2 disulfide bridges follow: Cys52-Cys59 and Cys53-Cys60. The residue at position 62 (Leu62) is a Leucine amide.

As to expression, expressed by the venom duct.

It localises to the secreted. In terms of biological role, in vivo, low levels of the peptide injected into male specimens of the Siamese fighting fish causes an immediate aggressive display in this fish in response to their reflection when placed in a mirrored aquarium; High levels of the peptide suppressed this behavior. No effect is observed when injected into mice. This chain is Conotoxin p5a, found in Conus purpurascens (Purple cone).